A 291-amino-acid polypeptide reads, in one-letter code: Phosphate import ATP-binding protein PstB (291 aa).

The ABC transporter domain maps to 45–286 (YSTQNLDLWY…PADKQTEDYI (242 aa)). Position 77-84 (77-84 (GPSGCGKS)) interacts with ATP.

Belongs to the ABC transporter superfamily. Phosphate importer (TC 3.A.1.7) family. In terms of assembly, the complex is composed of two ATP-binding proteins (PstB), two transmembrane proteins (PstC and PstA) and a solute-binding protein (PstS).

The protein localises to the cell membrane. The catalysed reaction is phosphate(out) + ATP + H2O = ADP + 2 phosphate(in) + H(+). Functionally, part of the ABC transporter complex PstSACB involved in phosphate import. Responsible for energy coupling to the transport system. The protein is Phosphate import ATP-binding protein PstB of Staphylococcus epidermidis (strain ATCC 35984 / DSM 28319 / BCRC 17069 / CCUG 31568 / BM 3577 / RP62A).